The chain runs to 378 residues: Anhydro-N-acetylmuramic acid kinase 2 (378 aa).

Position 14 to 22 (14 to 22 (GTVLDGNID)) interacts with ATP.

The protein belongs to the anhydro-N-acetylmuramic acid kinase family.

It carries out the reaction 1,6-anhydro-N-acetyl-beta-muramate + ATP + H2O = N-acetyl-D-muramate 6-phosphate + ADP + H(+). It functions in the pathway amino-sugar metabolism; 1,6-anhydro-N-acetylmuramate degradation. Its pathway is cell wall biogenesis; peptidoglycan recycling. Its function is as follows. Catalyzes the specific phosphorylation of 1,6-anhydro-N-acetylmuramic acid (anhMurNAc) with the simultaneous cleavage of the 1,6-anhydro ring, generating MurNAc-6-P. Is required for the utilization of anhMurNAc either imported from the medium or derived from its own cell wall murein, and thus plays a role in cell wall recycling. The chain is Anhydro-N-acetylmuramic acid kinase 2 from Jannaschia sp. (strain CCS1).